We begin with the raw amino-acid sequence, 2492 residues long: Transcriptional regulator ATRX (2492 aa).

Residues 1 to 147 (MTAEPMSESK…KDDFKGPEFR (147 aa)) are disordered. A Glycyl lysine isopeptide (Lys-Gly) (interchain with G-Cter in SUMO2) cross-link involves residue K10. Basic and acidic residues predominate over residues 17-27 (KLHDFLAHSSE). Residues S25 and S34 each carry the phosphoserine modification. Polar residues predominate over residues 40 to 57 (MNQNTDKISGSGSNSDMM). Positions 58-72 (ENSKEEGTSSSEKSK) are enriched in basic and acidic residues. Y89 carries the post-translational modification Phosphotyrosine. Phosphoserine is present on residues S92 and S112. Over residues 92 to 108 (SDDEKPLDDETVNEDAS) the composition is skewed to acidic residues. Over residues 135 to 147 (NEDKDDFKGPEFR) the composition is skewed to basic and acidic residues. Glycyl lysine isopeptide (Lys-Gly) (interchain with G-Cter in SUMO2) cross-links involve residues K138 and K142. One can recognise an ADD domain in the interval 159–296 (KRGEDGLHGI…LEQLLQQNKK (138 aa)). The segment at 170 to 206 (SCTACGQQVNHFQKDSIYRHPSLQVLICKNCFKYYMS) adopts a GATA-type; atypical zinc-finger fold. At S213 the chain carries Phosphoserine. The PHD-type; atypical zinc finger occupies 217 to 272 (DEQCRWCAEGGNLICCDFCHNAFCKKCILRNLGRKELSTIMDENNQWYCYICHPEP). K299 is covalently cross-linked (Glycyl lysine isopeptide (Lys-Gly) (interchain with G-Cter in SUMO2)). S316 carries the phosphoserine modification. Residue K438 forms a Glycyl lysine isopeptide (Lys-Gly) (interchain with G-Cter in SUMO2) linkage. The span at 445-502 (KGEKPCALEKKDISKSEAKLSRKQVDSEHMHQNVPTEEQRTNKSTGGEHKKSDRKEEP) shows a compositional bias: basic and acidic residues. Disordered regions lie at residues 445-516 (KGEK…LDMD) and 535-576 (AMEV…GIKS). Positions 550–567 (SGTEQEVESSSVKLNISS) are enriched in polar residues. A PxVxL motif motif is present at residues 581-594 (KVTKELYVKLTPVS). T591 is modified (phosphothreonine). Residues 593–616 (VSLSNSPIKGADCQEVPQDKDGYK) are disordered. S594 and S598 each carry phosphoserine. Residue K623 forms a Glycyl lysine isopeptide (Lys-Gly) (interchain with G-Cter in SUMO1); alternate linkage. K623 participates in a covalent cross-link: Glycyl lysine isopeptide (Lys-Gly) (interchain with G-Cter in SUMO2); alternate. The residue at position 634 (S634) is a Phosphoserine. The disordered stretch occupies residues 649 to 956 (EESDLRRSPR…KHLKTKTCKK (308 aa)). A Phosphothreonine modification is found at T674. 4 positions are modified to phosphoserine: S675, S677, S729, and S731. Residues 755–777 (NEIHTNHKTLYDLKTQAGKDDKG) show a composition bias toward basic and acidic residues. S784, S819, S849, S850, S875, and S876 each carry phosphoserine. Residues 843–864 (NTKDFDSSEDEKHSKKGMDNQG) are compositionally biased toward basic and acidic residues. Residues 878 to 887 (DAERKQERET) are compositionally biased toward basic and acidic residues. S889 is subject to Phosphoserine. Basic and acidic residues-rich tracts occupy residues 894–909 (TVDK…DRLP) and 920–944 (GVDK…ETKE). The span at 945-955 (KSKHLKTKTCK) shows a compositional bias: basic residues. S962 is modified (phosphoserine). K967 is modified (N6-acetyllysine). A compositionally biased stretch (basic and acidic residues) spans 968-1004 (FLKKDQSDETSEDDKKQSKKGTEEKKKPSDFKKKVIK). Residues 968–1479 (FLKKDQSDET…SKSPGKGRKK (512 aa)) are disordered. S974 bears the Phosphoserine mark. T977 bears the Phosphothreonine mark. A Glycyl lysine isopeptide (Lys-Gly) (interchain with G-Cter in SUMO2) cross-link involves residue K1004. Residues S1011, S1012, and S1013 each carry the phosphoserine modification. Basic and acidic residues predominate over residues 1015 to 1027 (GTEKLPEREEICH). A compositionally biased stretch (basic residues) spans 1045–1055 (KSKKIRDKTSK). The span at 1056-1082 (KKDELSDYAEKSTGKGDSCDSSEDKKS) shows a compositional bias: basic and acidic residues. The residue at position 1061 (S1061) is a Phosphoserine. Phosphotyrosine is present on Y1063. The span at 1090 to 1102 (EKKRCKLLGKSSR) shows a compositional bias: basic residues. A compositionally biased stretch (basic and acidic residues) spans 1103–1139 (KRQDCSSSDTEKYSMKEDGCNSSDKRLKRIELRERRN). Residues 1167–1195 (KKKQRTSSKKKAVIVKEKKRNSLRTSTKR) are compositionally biased toward basic residues. The interaction with DAXX stretch occupies residues 1189–1326 (LRTSTKRKQA…KNQVNSESDS (138 aa)). The span at 1233-1246 (LVLSSHTGFCQSSG) shows a compositional bias: polar residues. 3 positions are modified to phosphoserine: S1244, S1245, and S1253. Over residues 1267 to 1281 (PENRIAKKMLLEEIK) the composition is skewed to basic and acidic residues. Residues 1286-1297 (SDEDGSSDDEPE) show a composition bias toward acidic residues. The segment covering 1298-1308 (EGKKRTGKQNE) has biased composition (basic and acidic residues). Residues S1322, S1324, and S1326 each carry the phosphoserine modification. A compositionally biased stretch (basic residues) spans 1334–1345 (PRYRHRLLRHKL). A phosphoserine mark is found at S1348 and S1352. Composition is skewed to basic and acidic residues over residues 1353–1368 (GEEK…EVKG) and 1408–1417 (KKAELEENQR). Basic residues predominate over residues 1419-1428 (YKQKKKRRRI). Acidic residues predominate over residues 1443–1468 (EEEEEEKEEEEEEEEEEEEEEEDEND). A Glycyl lysine isopeptide (Lys-Gly) (interchain with G-Cter in SUMO2) cross-link involves residue K1488. At S1527 the chain carries Phosphoserine. T1529 bears the Phosphothreonine mark. Residues 1581–1768 (KTKKSPGSGC…HCMVNFIKEN (188 aa)) enclose the Helicase ATP-binding domain. Position 1594–1601 (1594–1601 (HCMGLGKT)) interacts with ATP. A DEGH box motif is present at residues 1719-1722 (DEGH). 2 positions are modified to phosphoserine: S1906 and S1913. The interval 1913–2000 (SDSDETSMSL…SSNPSSPAPD (88 aa)) is disordered. Residues 1929–1938 (KKKKKGKKGK) are compositionally biased toward basic residues. A Glycyl lysine isopeptide (Lys-Gly) (interchain with G-Cter in SUMO1); alternate cross-link involves residue K1982. K1982 is covalently cross-linked (Glycyl lysine isopeptide (Lys-Gly) (interchain with G-Cter in SUMO2); alternate). A Glycyl lysine isopeptide (Lys-Gly) (interchain with G-Cter in SUMO2) cross-link involves residue K1987. Positions 1990 to 1999 (SSSNPSSPAP) are enriched in low complexity. Phosphoserine occurs at positions 1992 and 1996. An interaction with MECP2 region spans residues 2010-2280 (DAEVLEHSGK…RKAAWAEYEA (271 aa)). One can recognise a Helicase C-terminal domain in the interval 2025-2205 (EILRMAEEIG…ERHFTMNELT (181 aa)). S2220 bears the Phosphoserine mark. Residues 2462–2492 (PVAGGMQPPPLQRAPPPMRSKNPGPSQGKSM) form a disordered region. Residues 2468-2479 (QPPPLQRAPPPM) show a composition bias toward pro residues. An omega-N-methylarginine mark is found at R2474 and R2480.

This sequence belongs to the SNF2/RAD54 helicase family. In terms of assembly, interacts with DAXX to form the chromatin remodeling complex ATRX:DAXX. Probably binds EZH2. Binds annexin V in a calcium and phosphatidylcholine/phosphatidylserine-dependent manner. Interacts directly with CBX5 via the PxVxL motif. Interacts with RAD50, MRE11 and NBN; indicative for an association with the MRN complex. Interacts with histone MACROH2A1. Interacts with histone H3 peptides methylated at 'Lys-10' with preferences H3K9me3 &gt; H3K9me2 &gt; H3K9me1. Interacts with histone H3 peptides unmethylated at 'Lys-5' (H3K4me0). Interacts with MECP2, SMC1 and SMC3. Interacts with SETDB1, TRIM28 and ZNF274. In terms of processing, phosphorylated at serine residues during mitose. Phosphorylation may promote the release from the nuclear matrix and progression to mitosis. In terms of tissue distribution, ubiquitous.

The protein resides in the nucleus. It is found in the chromosome. The protein localises to the telomere. It localises to the PML body. The catalysed reaction is ATP + H2O = ADP + phosphate + H(+). Involved in transcriptional regulation and chromatin remodeling. Facilitates DNA replication in multiple cellular environments and is required for efficient replication of a subset of genomic loci. Binds to DNA tandem repeat sequences in both telomeres and euchromatin and in vitro binds DNA quadruplex structures. May help stabilizing G-rich regions into regular chromatin structures by remodeling G4 DNA and incorporating H3.3-containing nucleosomes. Catalytic component of the chromatin remodeling complex ATRX:DAXX which has ATP-dependent DNA translocase activity and catalyzes the replication-independent deposition of histone H3.3 in pericentric DNA repeats outside S-phase and telomeres, and the in vitro remodeling of H3.3-containing nucleosomes. Its heterochromatin targeting is proposed to involve a combinatorial readout of histone H3 modifications (specifically methylation states of H3K9 and H3K4) and association with CBX5. Involved in maintaining telomere structural integrity in embryonic stem cells which probably implies recruitment of CBX5 to telomeres. Reports on the involvement in transcriptional regulation of telomeric repeat-containing RNA (TERRA) are conflicting; according to a report, it is not sufficient to decrease chromatin condensation at telomeres nor to increase expression of telomeric RNA in fibroblasts. May be involved in telomere maintenance via recombination in ALT (alternative lengthening of telomeres) cell lines. Acts as a negative regulator of chromatin incorporation of transcriptionally repressive histone MACROH2A1, particularily at telomeres and the alpha-globin cluster in erythroleukemic cells. Participates in the allele-specific gene expression at the imprinted IGF2/H19 gene locus. On the maternal allele, required for the chromatin occupancy of SMC1 and CTCTF within the H19 imprinting control region (ICR) and involved in esatblishment of histone tails modifications in the ICR. May be involved in brain development and facial morphogenesis. Binds to zinc-finger coding genes with atypical chromatin signatures and regulates its H3K9me3 levels. Forms a complex with ZNF274, TRIM28 and SETDB1 to facilitate the deposition and maintenance of H3K9me3 at the 3' exons of zinc-finger genes. This Homo sapiens (Human) protein is Transcriptional regulator ATRX (ATRX).